Consider the following 183-residue polypeptide: Holliday junction branch migration complex subunit RuvA (183 aa).

The tract at residues 1-64 (MVVGIEGIIT…EDSNKFYGFL (64 aa)) is domain I. A domain II region spans residues 65 to 139 (DKDEQKMFEM…DTKTKLENVS (75 aa)). Position 139 (Ser-139) is a region of interest, flexible linker. A domain III region spans residues 139–183 (SDDKSEALAALLTLGFKQEKIISVLASAQATGTSELIKEALKKLG).

This sequence belongs to the RuvA family. Homotetramer. Forms an RuvA(8)-RuvB(12)-Holliday junction (HJ) complex. HJ DNA is sandwiched between 2 RuvA tetramers; dsDNA enters through RuvA and exits via RuvB. An RuvB hexamer assembles on each DNA strand where it exits the tetramer. Each RuvB hexamer is contacted by two RuvA subunits (via domain III) on 2 adjacent RuvB subunits; this complex drives branch migration. In the full resolvosome a probable DNA-RuvA(4)-RuvB(12)-RuvC(2) complex forms which resolves the HJ.

The protein localises to the cytoplasm. In terms of biological role, the RuvA-RuvB-RuvC complex processes Holliday junction (HJ) DNA during genetic recombination and DNA repair, while the RuvA-RuvB complex plays an important role in the rescue of blocked DNA replication forks via replication fork reversal (RFR). RuvA specifically binds to HJ cruciform DNA, conferring on it an open structure. The RuvB hexamer acts as an ATP-dependent pump, pulling dsDNA into and through the RuvAB complex. HJ branch migration allows RuvC to scan DNA until it finds its consensus sequence, where it cleaves and resolves the cruciform DNA. The sequence is that of Holliday junction branch migration complex subunit RuvA from Campylobacter jejuni subsp. jejuni serotype O:23/36 (strain 81-176).